We begin with the raw amino-acid sequence, 488 residues long: Glutamyl-tRNA(Gln) amidotransferase subunit B, mitochondrial (488 aa).

The protein belongs to the GatB/GatE family. GatB subfamily. In terms of assembly, subunit of the heterotrimeric GatFAB amidotransferase (AdT) complex, composed of A, B and F subunits.

It is found in the mitochondrion. It catalyses the reaction L-glutamyl-tRNA(Gln) + L-glutamine + ATP + H2O = L-glutaminyl-tRNA(Gln) + L-glutamate + ADP + phosphate + H(+). Its function is as follows. Allows the formation of correctly charged Gln-tRNA(Gln) through the transamidation of misacylated Glu-tRNA(Gln) in the mitochondria. The reaction takes place in the presence of glutamine and ATP through an activated gamma-phospho-Glu-tRNA(Gln). In Candida albicans (strain WO-1) (Yeast), this protein is Glutamyl-tRNA(Gln) amidotransferase subunit B, mitochondrial.